The primary structure comprises 287 residues: Lipoyl synthase (287 aa).

7 residues coordinate [4Fe-4S] cluster: Cys34, Cys39, Cys45, Cys60, Cys64, Cys67, and Ser273. The region spanning Trp46–Leu262 is the Radical SAM core domain.

It belongs to the radical SAM superfamily. Lipoyl synthase family. The cofactor is [4Fe-4S] cluster.

Its subcellular location is the cytoplasm. The catalysed reaction is [[Fe-S] cluster scaffold protein carrying a second [4Fe-4S](2+) cluster] + N(6)-octanoyl-L-lysyl-[protein] + 2 oxidized [2Fe-2S]-[ferredoxin] + 2 S-adenosyl-L-methionine + 4 H(+) = [[Fe-S] cluster scaffold protein] + N(6)-[(R)-dihydrolipoyl]-L-lysyl-[protein] + 4 Fe(3+) + 2 hydrogen sulfide + 2 5'-deoxyadenosine + 2 L-methionine + 2 reduced [2Fe-2S]-[ferredoxin]. It participates in protein modification; protein lipoylation via endogenous pathway; protein N(6)-(lipoyl)lysine from octanoyl-[acyl-carrier-protein]: step 2/2. In terms of biological role, catalyzes the radical-mediated insertion of two sulfur atoms into the C-6 and C-8 positions of the octanoyl moiety bound to the lipoyl domains of lipoate-dependent enzymes, thereby converting the octanoylated domains into lipoylated derivatives. In Wolbachia pipientis wMel, this protein is Lipoyl synthase.